The chain runs to 567 residues: Dihydrolipoyllysine-residue acetyltransferase component of pyruvate dehydrogenase complex (567 aa).

Lipoyl-binding domains lie at 2–75 (SKQI…LVLE) and 108–181 (IVEV…MRFE). Lys41 and Lys147 each carry N6-lipoyllysine. Residues 192–238 (SAPASTSAPQTAAPATTAQAPQAAAPDTTAQAPQAAAPDTTAQAAQS) are compositionally biased toward low complexity. The disordered stretch occupies residues 192 to 249 (SAPASTSAPQTAAPATTAQAPQAAAPDTTAQAPQAAAPDTTAQAAQSNNNVSGLSQEQ). A compositionally biased stretch (polar residues) spans 239–249 (NNNVSGLSQEQ). One can recognise a Peripheral subunit-binding (PSBD) domain in the interval 258–295 (HATPVIRRLAREFGVNLDKVKGTGRKGRIVKEDIEAYV). Catalysis depends on residues Cys484, His540, and Asp544.

It belongs to the 2-oxoacid dehydrogenase family. In terms of assembly, forms a 24-polypeptide structural core with octahedral symmetry. The cofactor is (R)-lipoate.

It carries out the reaction N(6)-[(R)-dihydrolipoyl]-L-lysyl-[protein] + acetyl-CoA = N(6)-[(R)-S(8)-acetyldihydrolipoyl]-L-lysyl-[protein] + CoA. Functionally, the pyruvate dehydrogenase complex catalyzes the overall conversion of pyruvate to acetyl-CoA and CO(2). It contains multiple copies of three enzymatic components: pyruvate dehydrogenase (E1), dihydrolipoamide acetyltransferase (E2) and lipoamide dehydrogenase (E3). The sequence is that of Dihydrolipoyllysine-residue acetyltransferase component of pyruvate dehydrogenase complex (aceF) from Haemophilus influenzae (strain ATCC 51907 / DSM 11121 / KW20 / Rd).